Reading from the N-terminus, the 432-residue chain is Adenylosuccinate synthetase (432 aa).

GTP-binding positions include 13–19 (GDEGKGK) and 41–43 (GHT). Aspartate 14 acts as the Proton acceptor in catalysis. Positions 14 and 41 each coordinate Mg(2+). IMP contacts are provided by residues 14–17 (DEGK), 39–42 (NAGH), threonine 130, arginine 144, glutamine 225, threonine 240, and arginine 304. Histidine 42 acts as the Proton donor in catalysis. 300–306 (ATTGRRR) contributes to the substrate binding site. GTP-binding positions include arginine 306, 332 to 334 (KLD), and 415 to 417 (STG).

It belongs to the adenylosuccinate synthetase family. Homodimer. The cofactor is Mg(2+).

It localises to the cytoplasm. It carries out the reaction IMP + L-aspartate + GTP = N(6)-(1,2-dicarboxyethyl)-AMP + GDP + phosphate + 2 H(+). It participates in purine metabolism; AMP biosynthesis via de novo pathway; AMP from IMP: step 1/2. Functionally, plays an important role in the de novo pathway of purine nucleotide biosynthesis. Catalyzes the first committed step in the biosynthesis of AMP from IMP. The protein is Adenylosuccinate synthetase of Edwardsiella ictaluri (strain 93-146).